A 390-amino-acid chain; its full sequence is Neuromedin-B receptor (390 aa).

The Extracellular portion of the chain corresponds to 1-44; it reads MPPKSLSNLSQTAGVNQSGFFPGASERDFLPATDRTTAEFVIRC. Residues N8 and N16 are each glycosylated (N-linked (GlcNAc...) asparagine). Residues 45–65 traverse the membrane as a helical segment; that stretch reads VIPSLYLLIITVGLLGNIVLV. Over 66–76 the chain is Cytoplasmic; sequence KIFLTNSAMRS. Residues 77–97 traverse the membrane as a helical segment; that stretch reads VPNIFISNLAAGDVLLLLTCV. The Extracellular segment spans residues 98–117; it reads PVDASRYFLDEWMFGKVGCK. A disulfide bond links C116 and C198. The helical transmembrane segment at 118-138 threads the bilayer; that stretch reads LIPVIQLTSVGVSVFTLTALS. At 139–155 the chain is on the cytoplasmic side; that stretch reads ADRYRAIVNPMDIQTSG. A helical transmembrane segment spans residues 156 to 176; that stretch reads AVLWTCVKAGGIWVVSVLLAV. Over 177–210 the chain is Extracellular; sequence PEAVFSEVARIDGLDNGSFTACIPYPQTDELHPK. N192 is a glycosylation site (N-linked (GlcNAc...) asparagine). The chain crosses the membrane as a helical span at residues 211 to 231; it reads IHSVLIFLVYFLIPLGIISVY. Topologically, residues 232-266 are cytoplasmic; the sequence is YYHIAKTLIKSAHNLPGEYNEHTKKQMETRKRLAK. The helical transmembrane segment at 267–287 threads the bilayer; it reads IVLVFVGCFVFCWFPNHILYM. The Extracellular segment spans residues 288–305; that stretch reads YRSFNYNEIDPSLGHMIV. Residues 306–328 form a helical membrane-spanning segment; sequence TLVARVLSFCNSCVNPFALYLLS. The Cytoplasmic portion of the chain corresponds to 329-390; it reads ESFRKHFNNQ…GHSVKQEMAL (62 aa). The S-palmitoyl cysteine moiety is linked to residue C341. Phosphoserine is present on S352.

The protein belongs to the G-protein coupled receptor 1 family. As to expression, highly expressed in peripheral tissues where it is detected in the respiratory system, circulatory system, digestive system, urogenital system, lymphatic organs and endocrine system (at protein level). In the testis, expressed mainly in Leydig cells (at protein level).

The protein localises to the cell membrane. Its function is as follows. Receptor for neuromedin-B. Contributes to the maintenance of basal sigh rate through signaling in the pre-Botzinger complex, a cluster of several thousand neurons in the ventrolateral medulla responsible for inspiration during respiratory activity. Contributes to the induction of sneezing following exposure to chemical irritants or allergens which causes release of NMB by nasal sensory neurons and activation of NMBR-expressing neurons in the sneeze-evoking region of the brainstem. These in turn activate neurons of the caudal ventral respiratory group, giving rise to the sneezing response. Contributes to induction of acute itch, possibly through its activation on dorsal root ganglion neurons by the NMB peptide. Plays a role in the innate immune response to influenza A virus infection by enhancing interferon alpha expression and reducing expression of IL6. Plays a role in CSF1-induced proliferation of osteoclast precursors by contributing to the positive regulation of the expression of the CSF1 receptor CSF1R. The protein is Neuromedin-B receptor (NMBR) of Sus scrofa (Pig).